The primary structure comprises 63 residues: Small ribosomal subunit protein eS27 (63 aa).

Residues Cys18, Cys21, Cys37, and Cys40 each coordinate Zn(2+). A C4-type zinc finger spans residues 18–40; that stretch reads CLDCGNQQVVFDRAASYVQCIIC.

This sequence belongs to the eukaryotic ribosomal protein eS27 family. Part of the 30S ribosomal subunit. The cofactor is Zn(2+).

In Methanothermobacter thermautotrophicus (strain ATCC 29096 / DSM 1053 / JCM 10044 / NBRC 100330 / Delta H) (Methanobacterium thermoautotrophicum), this protein is Small ribosomal subunit protein eS27.